Reading from the N-terminus, the 369-residue chain is Phosphate acyltransferase (369 aa).

It belongs to the PlsX family. Homodimer. Probably interacts with PlsY.

The protein resides in the cytoplasm. The catalysed reaction is a fatty acyl-[ACP] + phosphate = an acyl phosphate + holo-[ACP]. Its pathway is lipid metabolism; phospholipid metabolism. Functionally, catalyzes the reversible formation of acyl-phosphate (acyl-PO(4)) from acyl-[acyl-carrier-protein] (acyl-ACP). This enzyme utilizes acyl-ACP as fatty acyl donor, but not acyl-CoA. In Gluconobacter oxydans (strain 621H) (Gluconobacter suboxydans), this protein is Phosphate acyltransferase.